Consider the following 130-residue polypeptide: Anti-adapter protein IraD (130 aa).

The protein belongs to the GpW/Gp25 family. IraD subfamily. As to quaternary structure, interacts with RssB.

It localises to the cytoplasm. Functionally, inhibits RpoS proteolysis by regulating RssB activity, thereby increasing the stability of the sigma stress factor RpoS during oxidative stress. Its effect on RpoS stability is due to its interaction with RssB, which probably blocks the interaction of RssB with RpoS, and the consequent delivery of the RssB-RpoS complex to the ClpXP protein degradation pathway. This chain is Anti-adapter protein IraD, found in Escherichia coli (strain K12 / MC4100 / BW2952).